A 266-amino-acid polypeptide reads, in one-letter code: Ribosomal RNA small subunit methyltransferase A (266 aa).

Positions 10, 12, 37, 58, 82, and 105 each coordinate S-adenosyl-L-methionine.

The protein belongs to the class I-like SAM-binding methyltransferase superfamily. rRNA adenine N(6)-methyltransferase family. RsmA subfamily.

The protein resides in the cytoplasm. The catalysed reaction is adenosine(1518)/adenosine(1519) in 16S rRNA + 4 S-adenosyl-L-methionine = N(6)-dimethyladenosine(1518)/N(6)-dimethyladenosine(1519) in 16S rRNA + 4 S-adenosyl-L-homocysteine + 4 H(+). Functionally, specifically dimethylates two adjacent adenosines (A1518 and A1519) in the loop of a conserved hairpin near the 3'-end of 16S rRNA in the 30S particle. May play a critical role in biogenesis of 30S subunits. The polypeptide is Ribosomal RNA small subunit methyltransferase A (Mycoplasma mycoides subsp. mycoides SC (strain CCUG 32753 / NCTC 10114 / PG1)).